A 340-amino-acid polypeptide reads, in one-letter code: ATPase get3 (340 aa).

34–41 (KGGVGKTT) contributes to the ATP binding site. D63 is a catalytic residue. Residues E242 and N269 each contribute to the ATP site. C280 and C283 together coordinate Zn(2+).

It belongs to the arsA ATPase family. Homodimer.

The protein localises to the cytoplasm. Its subcellular location is the endoplasmic reticulum. Its function is as follows. ATPase required for the post-translational delivery of tail-anchored (TA) proteins to the endoplasmic reticulum. Recognizes and selectively binds the transmembrane domain of TA proteins in the cytosol. This complex then targets to the endoplasmic reticulum by membrane-bound receptors, where the tail-anchored protein is released for insertion. This process is regulated by ATP binding and hydrolysis. ATP binding drives the homodimer towards the closed dimer state, facilitating recognition of newly synthesized TA membrane proteins. ATP hydrolysis is required for insertion. Subsequently, the homodimer reverts towards the open dimer state, lowering its affinity for the membrane-bound receptor, and returning it to the cytosol to initiate a new round of targeting. The polypeptide is ATPase get3 (get3) (Sclerotinia sclerotiorum (strain ATCC 18683 / 1980 / Ss-1) (White mold)).